The primary structure comprises 593 residues: Methionine--tRNA ligase, mitochondrial (593 aa).

The transit peptide at 1-29 (MLRTSVLRLLGRTGASRLSLLEDFGPRYY) directs the protein to the mitochondrion. The 'HIGH' region motif lies at 52–62 (FYVNAAPHIGH). The short motif at 347-351 (KMSKS) is the 'KMSKS' region element. Lysine 350 contributes to the ATP binding site.

This sequence belongs to the class-I aminoacyl-tRNA synthetase family.

It localises to the mitochondrion matrix. It carries out the reaction tRNA(Met) + L-methionine + ATP = L-methionyl-tRNA(Met) + AMP + diphosphate. This Homo sapiens (Human) protein is Methionine--tRNA ligase, mitochondrial (MARS2).